Consider the following 359-residue polypeptide: Protein mab-21-like 2 (359 aa).

It belongs to the mab-21 family.

It is found in the nucleus. The protein resides in the cytoplasm. Functionally, required for several aspects of embryonic development including normal development of the eye. The sequence is that of Protein mab-21-like 2 (mab21l2) from Xenopus tropicalis (Western clawed frog).